Here is a 665-residue protein sequence, read N- to C-terminus: FAD-dependent oxidoreductase domain-containing protein 2 (665 aa).

The signal sequence occupies residues 1-17 (MGPSGLLVALALHLAVC). Asparagine 136 carries an N-linked (GlcNAc...) asparagine glycan. The interval 642–665 (RWLGDHSTAPEPLTQSLDSNKEEL) is disordered. The short motif at 662-665 (KEEL) is the Prevents secretion from ER element.

The protein belongs to the FOXRED2 family. In terms of assembly, interacts with SEL1L. May interact with OS9 and DNAJC10. Interacts with TXNDC16. It depends on FAD as a cofactor. N-glycosylated.

The protein localises to the endoplasmic reticulum lumen. Its function is as follows. Probable flavoprotein which may function in endoplasmic reticulum associated degradation (ERAD). May bind non-native proteins in the endoplasmic reticulum and target them to the ubiquitination machinery for subsequent degradation. The polypeptide is FAD-dependent oxidoreductase domain-containing protein 2 (Mus musculus (Mouse)).